The following is a 188-amino-acid chain: Adenine phosphoribosyltransferase (188 aa).

This sequence belongs to the purine/pyrimidine phosphoribosyltransferase family. As to quaternary structure, homodimer.

It localises to the cytoplasm. The catalysed reaction is AMP + diphosphate = 5-phospho-alpha-D-ribose 1-diphosphate + adenine. It functions in the pathway purine metabolism; AMP biosynthesis via salvage pathway; AMP from adenine: step 1/1. In terms of biological role, catalyzes a salvage reaction resulting in the formation of AMP, that is energically less costly than de novo synthesis. The sequence is that of Adenine phosphoribosyltransferase from Burkholderia vietnamiensis (strain G4 / LMG 22486) (Burkholderia cepacia (strain R1808)).